Reading from the N-terminus, the 177-residue chain is ATP synthase subunit delta (177 aa).

This sequence belongs to the ATPase delta chain family. As to quaternary structure, F-type ATPases have 2 components, F(1) - the catalytic core - and F(0) - the membrane proton channel. F(1) has five subunits: alpha(3), beta(3), gamma(1), delta(1), epsilon(1). F(0) has three main subunits: a(1), b(2) and c(10-14). The alpha and beta chains form an alternating ring which encloses part of the gamma chain. F(1) is attached to F(0) by a central stalk formed by the gamma and epsilon chains, while a peripheral stalk is formed by the delta and b chains.

The protein localises to the cell inner membrane. F(1)F(0) ATP synthase produces ATP from ADP in the presence of a proton or sodium gradient. F-type ATPases consist of two structural domains, F(1) containing the extramembraneous catalytic core and F(0) containing the membrane proton channel, linked together by a central stalk and a peripheral stalk. During catalysis, ATP synthesis in the catalytic domain of F(1) is coupled via a rotary mechanism of the central stalk subunits to proton translocation. Its function is as follows. This protein is part of the stalk that links CF(0) to CF(1). It either transmits conformational changes from CF(0) to CF(1) or is implicated in proton conduction. The sequence is that of ATP synthase subunit delta from Haemophilus influenzae (strain PittGG).